The primary structure comprises 151 residues: SsrA-binding protein (151 aa).

It belongs to the SmpB family.

Its subcellular location is the cytoplasm. In terms of biological role, required for rescue of stalled ribosomes mediated by trans-translation. Binds to transfer-messenger RNA (tmRNA), required for stable association of tmRNA with ribosomes. tmRNA and SmpB together mimic tRNA shape, replacing the anticodon stem-loop with SmpB. tmRNA is encoded by the ssrA gene; the 2 termini fold to resemble tRNA(Ala) and it encodes a 'tag peptide', a short internal open reading frame. During trans-translation Ala-aminoacylated tmRNA acts like a tRNA, entering the A-site of stalled ribosomes, displacing the stalled mRNA. The ribosome then switches to translate the ORF on the tmRNA; the nascent peptide is terminated with the 'tag peptide' encoded by the tmRNA and targeted for degradation. The ribosome is freed to recommence translation, which seems to be the essential function of trans-translation. The chain is SsrA-binding protein from Campylobacter fetus subsp. fetus (strain 82-40).